A 285-amino-acid polypeptide reads, in one-letter code: Inositol oxygenase (285 aa).

Arginine 29 is a substrate binding site. At serine 33 the chain carries Phosphoserine. A substrate-binding site is contributed by 85–88; sequence DESD. 3 residues coordinate Fe cation: histidine 98, histidine 123, and aspartate 124. Substrate contacts are provided by residues lysine 127 and 141-142; that span reads GD. Histidine 194, histidine 220, and aspartate 253 together coordinate Fe cation. 220–221 lines the substrate pocket; it reads HS.

The protein belongs to the myo-inositol oxygenase family. It depends on Fe cation as a cofactor. Kidney specific. Renal proximal tubules.

Its subcellular location is the cytoplasm. It carries out the reaction myo-inositol + O2 = D-glucuronate + H2O + H(+). Its pathway is polyol metabolism; myo-inositol degradation into D-glucuronate; D-glucuronate from myo-inositol: step 1/1. The sequence is that of Inositol oxygenase (Miox) from Mus musculus (Mouse).